The primary structure comprises 215 residues: Small ribosomal subunit protein uS7 (215 aa).

The protein belongs to the universal ribosomal protein uS7 family. As to quaternary structure, part of the 30S ribosomal subunit.

Functionally, one of the primary rRNA binding proteins, it binds directly to 16S rRNA where it nucleates assembly of the head domain of the 30S subunit. Is located at the subunit interface close to the decoding center. The sequence is that of Small ribosomal subunit protein uS7 from Thermococcus onnurineus (strain NA1).